A 49-amino-acid polypeptide reads, in one-letter code: Large ribosomal subunit protein bL33B (49 aa).

Belongs to the bacterial ribosomal protein bL33 family.

The sequence is that of Large ribosomal subunit protein bL33B from Bacillus pumilus (strain SAFR-032).